Reading from the N-terminus, the 286-residue chain is Aquaporin NIP1-3 (286 aa).

Positions 1–44 (MAGGEHGVNGQHEETRAMEEGSRDHQARCENSEQDGGSKSSSNN) are disordered. Over residues 11-31 (QHEETRAMEEGSRDHQARCEN) the composition is skewed to basic and acidic residues. Polar residues predominate over residues 34–44 (QDGGSKSSSNN). The next 2 membrane-spanning stretches (helical) occupy residues 56 to 76 (VIAE…AVAV) and 84 to 104 (VTFP…VYSV). Residues 113–115 (NPA) carry the NPA 1 motif. Transmembrane regions (helical) follow at residues 131–153 (VPAY…RALF), 172–192 (SLAM…GVAT), and 200–220 (LAGL…GPIS). The short motif at 225–227 (NPA) is the NPA 2 element. Residues 239 to 259 (YTGIWVYIAGPVFGAVAGAWA) traverse the membrane as a helical segment.

Belongs to the MIP/aquaporin (TC 1.A.8) family. NIP (TC 1.A.8.12) subfamily.

The protein localises to the membrane. Aquaporins facilitate the transport of water and small neutral solutes across cell membranes. In Oryza sativa subsp. japonica (Rice), this protein is Aquaporin NIP1-3 (NIP1-3).